A 203-amino-acid polypeptide reads, in one-letter code: NAD(P)H dehydrogenase (quinone) (203 aa).

Positions 3-194 (IMVVYYSAYG…AGANFQGRHV (192 aa)) constitute a Flavodoxin-like domain. FMN is bound by residues 9 to 14 (SAYGHV) and 82 to 84 (ARF). Y11 serves as a coordination point for NAD(+). W102 is a substrate binding site. FMN is bound by residues 117–123 (STGTQHG) and H138.

It belongs to the WrbA family. Requires FMN as cofactor.

The enzyme catalyses a quinone + NADH + H(+) = a quinol + NAD(+). The catalysed reaction is a quinone + NADPH + H(+) = a quinol + NADP(+). In Syntrophus aciditrophicus (strain SB), this protein is NAD(P)H dehydrogenase (quinone).